An 80-amino-acid chain; its full sequence is Acyl carrier protein (80 aa).

Residues 4–79 (DEVKGQVYDI…DAINYIVEKK (76 aa)) form the Carrier domain. Serine 39 is subject to O-(pantetheine 4'-phosphoryl)serine.

The protein belongs to the acyl carrier protein (ACP) family. In terms of processing, 4'-phosphopantetheine is transferred from CoA to a specific serine of apo-ACP by AcpS. This modification is essential for activity because fatty acids are bound in thioester linkage to the sulfhydryl of the prosthetic group.

It localises to the cytoplasm. It participates in lipid metabolism; fatty acid biosynthesis. In terms of biological role, carrier of the growing fatty acid chain in fatty acid biosynthesis. The polypeptide is Acyl carrier protein (Chloroherpeton thalassium (strain ATCC 35110 / GB-78)).